Here is a 487-residue protein sequence, read N- to C-terminus: L-carnitine dehydrogenase/betainyl-CoA thioesterase (487 aa).

The segment at 1-327 (MTTAAIIGGG…DAALKPKALP (327 aa)) is L-carnitine dehydrogenase. Residue 8–13 (GGGVIG) coordinates NAD(+). The interval 328–487 (DLDTADLTQP…GAGSAIRKPA (160 aa)) is betainyl-CoA thioesterase.

This sequence in the N-terminal section; belongs to the 3-hydroxyacyl-CoA dehydrogenase family. L-carnitine dehydrogenase subfamily. The protein in the C-terminal section; belongs to the betainyl-CoA thioesterase family. In terms of assembly, homodimer.

It is found in the cytoplasm. It catalyses the reaction carnitine + NAD(+) = 3-dehydrocarnitine + NADH + H(+). The catalysed reaction is N,N,N-trimethylglycyl-CoA + H2O = glycine betaine + CoA + H(+). The protein operates within amine and polyamine metabolism; carnitine metabolism. Multifunctional enzyme that catalyzes the NAD(+)-dependent oxidation of L-carnitine to 3-dehydrocarnitine and the cleavage of betainyl-CoA (N,N,N-trimethylglycyl-CoA) into glycine betaine and coenzyme A. The chain is L-carnitine dehydrogenase/betainyl-CoA thioesterase from Ruegeria pomeroyi (strain ATCC 700808 / DSM 15171 / DSS-3) (Silicibacter pomeroyi).